The following is a 535-amino-acid chain: Bifunctional purine biosynthesis protein PurH (535 aa).

One can recognise an MGS-like domain in the interval 6–151; it reads TRLPVRRALI…KNHKDVAIVV (146 aa).

It belongs to the PurH family.

It catalyses the reaction (6R)-10-formyltetrahydrofolate + 5-amino-1-(5-phospho-beta-D-ribosyl)imidazole-4-carboxamide = 5-formamido-1-(5-phospho-D-ribosyl)imidazole-4-carboxamide + (6S)-5,6,7,8-tetrahydrofolate. The enzyme catalyses IMP + H2O = 5-formamido-1-(5-phospho-D-ribosyl)imidazole-4-carboxamide. It participates in purine metabolism; IMP biosynthesis via de novo pathway; 5-formamido-1-(5-phospho-D-ribosyl)imidazole-4-carboxamide from 5-amino-1-(5-phospho-D-ribosyl)imidazole-4-carboxamide (10-formyl THF route): step 1/1. The protein operates within purine metabolism; IMP biosynthesis via de novo pathway; IMP from 5-formamido-1-(5-phospho-D-ribosyl)imidazole-4-carboxamide: step 1/1. The chain is Bifunctional purine biosynthesis protein PurH from Azotobacter vinelandii (strain DJ / ATCC BAA-1303).